Consider the following 101-residue polypeptide: Small ribosomal subunit protein uS14 (101 aa).

This sequence belongs to the universal ribosomal protein uS14 family. In terms of assembly, part of the 30S ribosomal subunit. Contacts proteins S3 and S10.

In terms of biological role, binds 16S rRNA, required for the assembly of 30S particles and may also be responsible for determining the conformation of the 16S rRNA at the A site. This is Small ribosomal subunit protein uS14 from Xylella fastidiosa (strain 9a5c).